The primary structure comprises 191 residues: Neuronal calcium sensor 1 (191 aa).

The N-myristoyl glycine moiety is linked to residue glycine 2. EF-hand domains lie at 24 to 59 (EAEI…FPFG), 60 to 95 (DPSK…TSRG), 96 to 131 (TVEE…IYRM), and 144 to 179 (TPEK…DPTI). Ca(2+) is bound by residues aspartate 73, asparagine 75, aspartate 77, glutamate 84, aspartate 109, aspartate 111, aspartate 113, glutamate 120, aspartate 157, asparagine 159, aspartate 161, lysine 163, and glutamate 168.

This sequence belongs to the recoverin family.

Neuronal calcium sensor, regulator of G protein-coupled receptor phosphorylation in a calcium dependent manner. Regulates neurite extension and branching by activity-dependent (Ca2+) influx in growth cones. The chain is Neuronal calcium sensor 1 from Aplysia californica (California sea hare).